The following is a 132-amino-acid chain: Small ribosomal subunit protein uS8 (132 aa).

The protein belongs to the universal ribosomal protein uS8 family. In terms of assembly, part of the 30S ribosomal subunit. Contacts proteins S5 and S12.

One of the primary rRNA binding proteins, it binds directly to 16S rRNA central domain where it helps coordinate assembly of the platform of the 30S subunit. The polypeptide is Small ribosomal subunit protein uS8 (Streptococcus uberis (strain ATCC BAA-854 / 0140J)).